The chain runs to 465 residues: UPF0324 membrane protein CC_0425 (465 aa).

Residues 97–132 form a disordered region; sequence HRQPDRAPPARASEQPLRQGRRALRRRPDQRRHRPR. Residues 115 to 132 are compositionally biased toward basic residues; it reads QGRRALRRRPDQRRHRPR. 10 helical membrane-spanning segments follow: residues 135–157, 172–194, 219–241, 251–273, 286–308, 318–340, 352–374, 378–400, 405–427, and 442–464; these read AAALRLGAARIGPGLLAGLLMAV, LLAVVLGMMLGALGLQGQLGAGL, AALGGPAVLASGAVVLGGLGIGA, LAEALIAAAACSICGASAALAAS, TALVIVGVNLLSTVAMLAYPPIA, AGVFFGLSIHDVAQVAGAGASVS, LSRILWLGPAVVLIGLMLTRTAQ, ISGLQAPPLFVWGFAALAAARGL, PALVSALGACSGFLLLAGVGAIS, and LAILLVTLTVAVAILAYALTRIF.

Belongs to the UPF0324 family.

It is found in the cell membrane. In Caulobacter vibrioides (strain ATCC 19089 / CIP 103742 / CB 15) (Caulobacter crescentus), this protein is UPF0324 membrane protein CC_0425.